We begin with the raw amino-acid sequence, 116 residues long: UPF0342 protein CTC_01059 (116 aa).

The protein belongs to the UPF0342 family.

The protein is UPF0342 protein CTC_01059 of Clostridium tetani (strain Massachusetts / E88).